Consider the following 380-residue polypeptide: Sialidase-2 (380 aa).

The FRIP motif signature appears at 20-23 (YRIP). Arg-21 and Arg-41 together coordinate substrate. Asp-46 serves as the catalytic Proton acceptor. The stretch at 127-138 (VTSTDHGRTWSS) is one BNR 1 repeat. Positions 179 and 181 each coordinate substrate. The stretch at 197–208 (FLSHDHGRTWAR) is one BNR 2 repeat. Residues Glu-218, Arg-237, and Arg-304 each coordinate substrate. Tyr-334 serves as the catalytic Nucleophile. Glu-355 is a catalytic residue.

The protein belongs to the glycosyl hydrolase 33 family. Expressed in skeletal muscle, fetal liver and embryonic carcinoma cell line NT2-D1.

The protein localises to the cytoplasm. It is found in the cytosol. The catalysed reaction is Hydrolysis of alpha-(2-&gt;3)-, alpha-(2-&gt;6)-, alpha-(2-&gt;8)- glycosidic linkages of terminal sialic acid residues in oligosaccharides, glycoproteins, glycolipids, colominic acid and synthetic substrates.. It carries out the reaction a ganglioside GD1a + H2O = a ganglioside GM1 + N-acetylneuraminate. It catalyses the reaction a ganglioside GM1 + H2O = a ganglioside GA1 + N-acetylneuraminate. The enzyme catalyses a ganglioside GT1b + H2O = a ganglioside GD1b + N-acetylneuraminate. The catalysed reaction is a ganglioside GD1b + H2O = a ganglioside GM1 + N-acetylneuraminate. It carries out the reaction a ganglioside GD3 + H2O = a ganglioside GM3 + N-acetylneuraminate. It catalyses the reaction a ganglioside GM3 + H2O = a beta-D-galactosyl-(1-&gt;4)-beta-D-glucosyl-(1&lt;-&gt;1)-ceramide + N-acetylneuraminate. The enzyme catalyses a ganglioside GM2 + H2O = a ganglioside GA2 + N-acetylneuraminate. The catalysed reaction is a neolactoside IV(3)-alpha-NeuAc-nLc4Cer(d18:1(4E)) + H2O = a neolactoside nLc4Cer(d18:1(4E)) + N-acetylneuraminate. It carries out the reaction N-acetyl-alpha-neuraminosyl-(2-&gt;3)-beta-D-galactosyl-(1-&gt;4)-D-glucose + H2O = lactose + N-acetylneuraminate. Exo-alpha-sialidase that catalyzes the hydrolytic cleavage of the terminal sialic acid (N-acetylneuraminic acid, Neu5Ac) of a glycan moiety in the catabolism of glycolipids, glycoproteins and oligosacharides. Recognizes sialyl linkage positions of the glycan moiety as well as the supramolecular organization of the sialoglycoconjugate. Displays preference for alpha-(2-&gt;3)-sialylated GD1a and GT1B gangliosides over alpha-(2-&gt;8)-sialylated GD1b, in both monomeric forms and micelles. Hydrolyzes monomeric GM1 ganglioside, but has no activity toward the miscellar form. Has lower sialidase activity for glycoproteins such as fetuin and TF/transferrin that carry a mixture of alpha-(2-&gt;3) and alpha-(2-&gt;6)-sialyl linkages. Cleaves milk oligosaccharide alpha-(2-&gt;3)-sialyllactose, but is inactive toward alpha-(2-&gt;6)-sialyllactose isomer. Has no activity toward colominic acid, a homomer of alpha-(2-&gt;8)-linked Neu5Ac residues. The chain is Sialidase-2 (NEU2) from Homo sapiens (Human).